We begin with the raw amino-acid sequence, 930 residues long: uncharacterized protein (930 aa).

The signal sequence occupies residues 1-20; sequence MPSFVLWTFHLCSQWFQGLT. N137, N146, N164, N210, N257, N628, N717, and N799 each carry an N-linked (GlcNAc...) asparagine glycan.

Its subcellular location is the secreted. This is an uncharacterized protein from Arthroderma benhamiae (strain ATCC MYA-4681 / CBS 112371) (Trichophyton mentagrophytes).